The sequence spans 130 residues: Phosphoribosyl-AMP cyclohydrolase (130 aa).

Aspartate 78 lines the Mg(2+) pocket. Residue cysteine 79 coordinates Zn(2+). Mg(2+) contacts are provided by aspartate 80 and aspartate 82. Cysteine 96 and cysteine 103 together coordinate Zn(2+).

It belongs to the PRA-CH family. Homodimer. Mg(2+) serves as cofactor. Requires Zn(2+) as cofactor.

It localises to the cytoplasm. The enzyme catalyses 1-(5-phospho-beta-D-ribosyl)-5'-AMP + H2O = 1-(5-phospho-beta-D-ribosyl)-5-[(5-phospho-beta-D-ribosylamino)methylideneamino]imidazole-4-carboxamide. Its pathway is amino-acid biosynthesis; L-histidine biosynthesis; L-histidine from 5-phospho-alpha-D-ribose 1-diphosphate: step 3/9. Its function is as follows. Catalyzes the hydrolysis of the adenine ring of phosphoribosyl-AMP. The sequence is that of Phosphoribosyl-AMP cyclohydrolase from Nitrosospira multiformis (strain ATCC 25196 / NCIMB 11849 / C 71).